The chain runs to 439 residues: Ornithine aminotransferase, mitochondrial (439 aa).

The transit peptide at 1 to 25 (MLSKLASLQTIAALRRGVHTSVASA) directs the protein to the mitochondrion. Residues K49 and K66 each carry the N6-acetyllysine modification. Residue K102 is modified to N6-succinyllysine. An N6-acetyllysine; alternate modification is found at K107. K107 carries the post-translational modification N6-succinyllysine; alternate. K292 is subject to N6-(pyridoxal phosphate)lysine. K362 is subject to N6-acetyllysine; alternate. An N6-succinyllysine; alternate modification is found at K362. An N6-acetyllysine mark is found at K386 and K392. K405 bears the N6-acetyllysine; alternate mark. K405 carries the post-translational modification N6-succinyllysine; alternate. An N6-acetyllysine modification is found at K421.

It belongs to the class-III pyridoxal-phosphate-dependent aminotransferase family. As to quaternary structure, homohexamer. The cofactor is pyridoxal 5'-phosphate.

The protein resides in the mitochondrion matrix. The enzyme catalyses L-ornithine + 2-oxoglutarate = L-glutamate 5-semialdehyde + L-glutamate. It functions in the pathway amino-acid biosynthesis; L-proline biosynthesis; L-glutamate 5-semialdehyde from L-ornithine: step 1/1. Its function is as follows. Catalyzes the reversible interconversion of L-ornithine and 2-oxoglutarate to L-glutamate semialdehyde and L-glutamate. The protein is Ornithine aminotransferase, mitochondrial (Oat) of Mus musculus (Mouse).